The following is an 820-amino-acid chain: Phenylalanine--tRNA ligase beta subunit (820 aa).

The region spanning 42–154 (KGGLEGLVIG…AEAVPGTLAK (113 aa)) is the tRNA-binding domain. The 77-residue stretch at 413–489 (PQDFMVELSY…RIYGYNNVEI (77 aa)) folds into the B5 domain. 4 residues coordinate Mg(2+): Asp467, Asp473, Glu476, and Asp477. In terms of domain architecture, FDX-ACB spans 727 to 820 (SKFPAVKRDL…LEDKLNAKLR (94 aa)).

Belongs to the phenylalanyl-tRNA synthetase beta subunit family. Type 1 subfamily. As to quaternary structure, tetramer of two alpha and two beta subunits. It depends on Mg(2+) as a cofactor.

It localises to the cytoplasm. It catalyses the reaction tRNA(Phe) + L-phenylalanine + ATP = L-phenylalanyl-tRNA(Phe) + AMP + diphosphate + H(+). This Bacteroides thetaiotaomicron (strain ATCC 29148 / DSM 2079 / JCM 5827 / CCUG 10774 / NCTC 10582 / VPI-5482 / E50) protein is Phenylalanine--tRNA ligase beta subunit.